The primary structure comprises 412 residues: Alanyl-tRNA editing protein Aarsd1 (412 aa).

Residues histidine 109 and histidine 113 each coordinate Zn(2+). Phosphoserine is present on serine 174. Positions 209 and 213 each coordinate Zn(2+).

Belongs to the class-II aminoacyl-tRNA synthetase family. Alax-L subfamily. The cofactor is Zn(2+).

The protein resides in the cytoplasm. Its function is as follows. Functions in trans to edit the amino acid moiety from incorrectly charged tRNA(Ala). This is Alanyl-tRNA editing protein Aarsd1 (Aarsd1) from Rattus norvegicus (Rat).